Consider the following 423-residue polypeptide: Cytidylate cyclase (423 aa).

In terms of domain architecture, Guanylate cyclase spans 79-184 (CSLFVDISGS…LKIRIGIDFG (106 aa)). F82 contacts a ribonucleoside 5'-triphosphate. Residues D84, I85, and D128 each coordinate Mn(2+). The AGS-C domain stretch occupies residues 290–409 (ENEQFYSPRD…ICHDSFGLFI (120 aa)).

This sequence belongs to the adenylyl cyclase class-4/guanylyl cyclase family. Pyrimidine cyclase subfamily. In terms of assembly, homodimer. The cofactor is Mn(2+).

Its subcellular location is the cytoplasm. The enzyme catalyses CTP = 3',5'-cyclic CMP + diphosphate. In terms of biological role, pycsar (pyrimidine cyclase system for antiphage resistance) provides immunity against bacteriophage. The pyrimidine cyclase (PycC) synthesizes cyclic nucleotides in response to infection; these serve as specific second messenger signals. The signal activates the adjacent effector, leading to bacterial cell death and abortive phage infection. A clade E Pycsar system. The pyrimidine cyclase gene of a two-gene Pycsar system, weakly generates cyclic CMP (cCMP) from CTP, has little to no activity on ATP, GTP or UTP. Expression of this and adjacent effector SaPycTM (AC P0DV39) probably confers resistance to bacteriophage. The genes are probably only expressed in response to bacteriophage infection. In Staphylococcus aureus, this protein is Cytidylate cyclase.